The following is a 358-amino-acid chain: Gap junction alpha-5 protein (358 aa).

Topologically, residues 1–19 are cytoplasmic; the sequence is MGDWSFLGEFLEEVHKHST. The helical transmembrane segment at 20-40 threads the bilayer; sequence VIGKVWLTVLFIFRMLVLGTA. Residues 41–76 are Extracellular-facing; sequence AESSWGDEQADFRCDTIQPGCQNVCYDQAFPISHIR. Residues 77-97 form a helical membrane-spanning segment; it reads YWVLQIIFVSTPSLVYMGHAM. At 98 to 164 the chain is on the cytoplasmic side; the sequence is HTVRMQEKQK…CTILIRTTME (67 aa). The chain crosses the membrane as a helical span at residues 165 to 185; that stretch reads VAFIVGQYLLYGIFLDTLHVC. Residues 186 to 205 lie on the Extracellular side of the membrane; sequence RRSPCPHPVNCYVSRPTEKN. Residues 206 to 226 form a helical membrane-spanning segment; it reads VFIVFMMAVAGLSLFLSLAEL. Topologically, residues 227-358 are cytoplasmic; that stretch reads YHLGWKKIRQ…SKARSDDLSV (132 aa). Disordered regions lie at residues 242–262 and 318–358; these read RQGV…QSLT and SQKP…DLSV. Residues Ser-353 and Ser-357 each carry the phosphoserine modification.

It belongs to the connexin family. Alpha-type (group II) subfamily. In terms of assembly, a connexon is composed of a hexamer of connexins. In terms of tissue distribution, abundantly expressed in the lung, also expressed in the kidney and heart.

It localises to the cell membrane. The protein resides in the cell junction. Its subcellular location is the gap junction. In terms of biological role, one gap junction consists of a cluster of closely packed pairs of transmembrane channels, the connexons, through which materials of low MW diffuse from one cell to a neighboring cell. This Mus musculus (Mouse) protein is Gap junction alpha-5 protein (Gja5).